Consider the following 390-residue polypeptide: Transforming protein cbl (390 aa).

A disordered region spans residues 1–52 (ASAGGGCRRGPSFSPGSIPSLAAERAPDPPLAMAGNVKKSSGAGGGGSGGSG). Positions 42 to 52 (GAGGGGSGGSG) are enriched in gly residues. Residues 77–205 (PPCTVDKKMV…KGIFPSGLFQ (129 aa)) form a 4H region. The Cbl-PTB domain occupies 77–381 (PPCTVDKKMV…GRNQNPDLTG (305 aa)). The segment at 206-278 (GDTFRITKAD…FEFDIFTRLF (73 aa)) is EF-hand-like. 5 residues coordinate Ca(2+): Asp259, Thr261, Asn263, Tyr265, and Glu270. Residues 279-381 (QPWSSLLRNW…GRNQNPDLTG (103 aa)) form an SH2-like region. Arg324 contacts 4-O-phospho-L-tyrosine.

Its function is as follows. Induces early B-lineage lymphomas. The sequence is that of Transforming protein cbl (V-CBL) from Mus musculus (Mouse).